A 385-amino-acid chain; its full sequence is Succinate--CoA ligase [ADP-forming] subunit beta (385 aa).

The ATP-grasp domain maps to 9-237 (KEILRQFGVN…LEAEHPLEIE (229 aa)). Residues Lys45, 52–54 (GRG), Val94, and Glu101 each bind ATP. Residues Asn192 and Asp206 each contribute to the Mg(2+) site. Substrate-binding positions include Asn257 and 314–316 (GIT).

It belongs to the succinate/malate CoA ligase beta subunit family. In terms of assembly, heterotetramer of two alpha and two beta subunits. The cofactor is Mg(2+).

It carries out the reaction succinate + ATP + CoA = succinyl-CoA + ADP + phosphate. The enzyme catalyses GTP + succinate + CoA = succinyl-CoA + GDP + phosphate. It functions in the pathway carbohydrate metabolism; tricarboxylic acid cycle; succinate from succinyl-CoA (ligase route): step 1/1. Its function is as follows. Succinyl-CoA synthetase functions in the citric acid cycle (TCA), coupling the hydrolysis of succinyl-CoA to the synthesis of either ATP or GTP and thus represents the only step of substrate-level phosphorylation in the TCA. The beta subunit provides nucleotide specificity of the enzyme and binds the substrate succinate, while the binding sites for coenzyme A and phosphate are found in the alpha subunit. This is Succinate--CoA ligase [ADP-forming] subunit beta from Deinococcus deserti (strain DSM 17065 / CIP 109153 / LMG 22923 / VCD115).